The sequence spans 149 residues: Urease accessory protein UreE (149 aa).

It belongs to the UreE family.

It is found in the cytoplasm. In terms of biological role, involved in urease metallocenter assembly. Binds nickel. Probably functions as a nickel donor during metallocenter assembly. The protein is Urease accessory protein UreE of Prochlorococcus marinus (strain MIT 9312).